We begin with the raw amino-acid sequence, 66 residues long: Large ribosomal subunit protein bL35 (66 aa).

This sequence belongs to the bacterial ribosomal protein bL35 family.

The polypeptide is Large ribosomal subunit protein bL35 (Phenylobacterium zucineum (strain HLK1)).